Consider the following 270-residue polypeptide: NADPH-dependent 7-cyano-7-deazaguanine reductase (270 aa).

79–81 (IES) provides a ligand contact to substrate. 81–82 (SK) lines the NADPH pocket. The active-site Thioimide intermediate is the Cys177. Residue Asp184 is the Proton donor of the active site. 216–217 (HE) contacts substrate. Residue 245–246 (RG) coordinates NADPH.

This sequence belongs to the GTP cyclohydrolase I family. QueF type 2 subfamily. In terms of assembly, homodimer.

It localises to the cytoplasm. It catalyses the reaction 7-aminomethyl-7-carbaguanine + 2 NADP(+) = 7-cyano-7-deazaguanine + 2 NADPH + 3 H(+). It functions in the pathway tRNA modification; tRNA-queuosine biosynthesis. Catalyzes the NADPH-dependent reduction of 7-cyano-7-deazaguanine (preQ0) to 7-aminomethyl-7-deazaguanine (preQ1). In Acinetobacter baumannii (strain ACICU), this protein is NADPH-dependent 7-cyano-7-deazaguanine reductase.